The following is a 234-amino-acid chain: Leucyl/phenylalanyl-tRNA--protein transferase (234 aa).

The protein belongs to the L/F-transferase family.

It is found in the cytoplasm. It carries out the reaction N-terminal L-lysyl-[protein] + L-leucyl-tRNA(Leu) = N-terminal L-leucyl-L-lysyl-[protein] + tRNA(Leu) + H(+). It catalyses the reaction N-terminal L-arginyl-[protein] + L-leucyl-tRNA(Leu) = N-terminal L-leucyl-L-arginyl-[protein] + tRNA(Leu) + H(+). The catalysed reaction is L-phenylalanyl-tRNA(Phe) + an N-terminal L-alpha-aminoacyl-[protein] = an N-terminal L-phenylalanyl-L-alpha-aminoacyl-[protein] + tRNA(Phe). Its function is as follows. Functions in the N-end rule pathway of protein degradation where it conjugates Leu, Phe and, less efficiently, Met from aminoacyl-tRNAs to the N-termini of proteins containing an N-terminal arginine or lysine. This Tolumonas auensis (strain DSM 9187 / NBRC 110442 / TA 4) protein is Leucyl/phenylalanyl-tRNA--protein transferase.